We begin with the raw amino-acid sequence, 393 residues long: Elongation factor Tu (393 aa).

A tr-type G domain is found at 10 to 203 (KPHVNIGTIG…AVDAFIPDPV (194 aa)). Residues 19 to 26 (GHVDHGKT) are G1. GTP is bound at residue 19–26 (GHVDHGKT). Mg(2+) is bound at residue T26. Residues 60 to 64 (GITIS) are G2. The interval 81-84 (DCPG) is G3. GTP is bound by residues 81-85 (DCPGH) and 136-139 (NKVD). A G4 region spans residues 136 to 139 (NKVD). Residues 173 to 175 (SAL) are G5.

The protein belongs to the TRAFAC class translation factor GTPase superfamily. Classic translation factor GTPase family. EF-Tu/EF-1A subfamily. In terms of assembly, monomer.

It localises to the cytoplasm. The catalysed reaction is GTP + H2O = GDP + phosphate + H(+). Functionally, GTP hydrolase that promotes the GTP-dependent binding of aminoacyl-tRNA to the A-site of ribosomes during protein biosynthesis. This Chlorobium chlorochromatii (strain CaD3) protein is Elongation factor Tu.